The sequence spans 20 residues: Cytochrome c oxidase subunit 7B-liver, mitochondrial (20 aa).

It belongs to the cytochrome c oxidase VIIb family. Component of the cytochrome c oxidase (complex IV, CIV), a multisubunit enzyme composed of 14 subunits. The complex is composed of a catalytic core of 3 subunits MT-CO1, MT-CO2 and MT-CO3, encoded in the mitochondrial DNA, and 11 supernumerary subunits COX4I, COX5A, COX5B, COX6A, COX6B, COX6C, COX7A, COX7B, COX7C, COX8 and NDUFA4, which are encoded in the nuclear genome. The complex exists as a monomer or a dimer and forms supercomplexes (SCs) in the inner mitochondrial membrane with NADH-ubiquinone oxidoreductase (complex I, CI) and ubiquinol-cytochrome c oxidoreductase (cytochrome b-c1 complex, complex III, CIII), resulting in different assemblies (supercomplex SCI(1)III(2)IV(1) and megacomplex MCI(2)III(2)IV(2)).

It is found in the mitochondrion inner membrane. It catalyses the reaction 4 Fe(II)-[cytochrome c] + O2 + 8 H(+)(in) = 4 Fe(III)-[cytochrome c] + 2 H2O + 4 H(+)(out). Its pathway is energy metabolism; oxidative phosphorylation. Component of the cytochrome c oxidase, the last enzyme in the mitochondrial electron transport chain which drives oxidative phosphorylation. The respiratory chain contains 3 multisubunit complexes succinate dehydrogenase (complex II, CII), ubiquinol-cytochrome c oxidoreductase (cytochrome b-c1 complex, complex III, CIII) and cytochrome c oxidase (complex IV, CIV), that cooperate to transfer electrons derived from NADH and succinate to molecular oxygen, creating an electrochemical gradient over the inner membrane that drives transmembrane transport and the ATP synthase. Cytochrome c oxidase is the component of the respiratory chain that catalyzes the reduction of oxygen to water. Electrons originating from reduced cytochrome c in the intermembrane space (IMS) are transferred via the dinuclear copper A center (CU(A)) of subunit 2 and heme A of subunit 1 to the active site in subunit 1, a binuclear center (BNC) formed by heme A3 and copper B (CU(B)). The BNC reduces molecular oxygen to 2 water molecules using 4 electrons from cytochrome c in the IMS and 4 protons from the mitochondrial matrix. This is Cytochrome c oxidase subunit 7B-liver, mitochondrial from Thunnus obesus (Bigeye tuna).